The chain runs to 185 residues: UPF0149 protein XF_2010 (185 aa).

This sequence belongs to the UPF0149 family.

The chain is UPF0149 protein XF_2010 from Xylella fastidiosa (strain 9a5c).